The chain runs to 277 residues: NADPH-dependent 7-cyano-7-deazaguanine reductase (277 aa).

86-88 contacts substrate; that stretch reads IES. NADPH is bound at residue 88–89; sequence SK. Cysteine 185 serves as the catalytic Thioimide intermediate. Aspartate 192 acts as the Proton donor in catalysis. Substrate is bound at residue 224 to 225; the sequence is HE. 253 to 254 is an NADPH binding site; that stretch reads RG.

This sequence belongs to the GTP cyclohydrolase I family. QueF type 2 subfamily. In terms of assembly, homodimer.

It is found in the cytoplasm. It carries out the reaction 7-aminomethyl-7-carbaguanine + 2 NADP(+) = 7-cyano-7-deazaguanine + 2 NADPH + 3 H(+). It participates in tRNA modification; tRNA-queuosine biosynthesis. Functionally, catalyzes the NADPH-dependent reduction of 7-cyano-7-deazaguanine (preQ0) to 7-aminomethyl-7-deazaguanine (preQ1). In Hydrogenovibrio crunogenus (strain DSM 25203 / XCL-2) (Thiomicrospira crunogena), this protein is NADPH-dependent 7-cyano-7-deazaguanine reductase.